The primary structure comprises 155 residues: Small ribosomal subunit protein uS7c (155 aa).

Belongs to the universal ribosomal protein uS7 family. In terms of assembly, part of the 30S ribosomal subunit.

It is found in the plastid. The protein resides in the chloroplast. One of the primary rRNA binding proteins, it binds directly to 16S rRNA where it nucleates assembly of the head domain of the 30S subunit. This is Small ribosomal subunit protein uS7c (rps7) from Metasequoia glyptostroboides (Dawn redwood).